We begin with the raw amino-acid sequence, 312 residues long: Protease HtpX homolog (312 aa).

2 consecutive transmembrane segments (helical) span residues 6 to 26 and 28 to 48; these read TAVL…AIGG and GGMM…YWYA. His-130 is a binding site for Zn(2+). Glu-131 is a catalytic residue. His-134 is a Zn(2+) binding site. 2 helical membrane passes run 145-165 and 173-193; these read ITAS…FFGG and PFGG…AMVV. Zn(2+) is bound at residue Glu-202. Positions 287–297 are enriched in low complexity; sequence PAPARAAPARG. Positions 287-312 are disordered; that stretch reads PAPARAAPARGPWGGNTGGTRRGPWG. A compositionally biased stretch (gly residues) spans 298–312; the sequence is PWGGNTGGTRRGPWG.

This sequence belongs to the peptidase M48B family. Zn(2+) is required as a cofactor.

Its subcellular location is the cell inner membrane. The protein is Protease HtpX homolog of Azorhizobium caulinodans (strain ATCC 43989 / DSM 5975 / JCM 20966 / LMG 6465 / NBRC 14845 / NCIMB 13405 / ORS 571).